A 133-amino-acid chain; its full sequence is Profilin-3 (133 aa).

Belongs to the profilin family. As to quaternary structure, occurs in many kinds of cells as a complex with monomeric actin in a 1:1 ratio.

It is found in the cytoplasm. The protein resides in the cytoskeleton. Its function is as follows. Binds to actin and affects the structure of the cytoskeleton. At high concentrations, profilin prevents the polymerization of actin, whereas it enhances it at low concentrations. By binding to PIP2, it inhibits the formation of IP3 and DG. The sequence is that of Profilin-3 (PRO3) from Nicotiana tabacum (Common tobacco).